Consider the following 280-residue polypeptide: MELNGFLRYKKLFIVLALLFTTILIVSLSLLAFALVVKTNGSELGVVFHQTEDNTTVIQGRSIVEQPWFIPTVAGSFGFSALAIILGLAIGLPIVKRKEKRLLEEKERQEQIAEQLQRISDQQEQQTVEIDPQQSQAQPSQPQVQQPLQPQFQQRVPLLRPAFNPNMQQRPGFNQPNQQFQPHNNFNPRMNPNMQRPGFNPNMQQRPGFNQPNQQFQPHNNFNPRMNPNMQRPGFNQPHPNQFAQPNNFNPNMQQRPGFNPNMQQRPNPSQLMPKGGLKP.

A run of 2 helical transmembrane segments spans residues 13–37 (FIVL…ALVV) and 68–92 (WFIP…AIGL). Positions 114–128 (EQLQRISDQQEQQTV) are enriched in polar residues. Disordered stretches follow at residues 114–149 (EQLQ…QPLQ) and 163–280 (FNPN…GLKP). Composition is skewed to low complexity over residues 132–149 (PQQS…QPLQ) and 168–188 (QQRP…NFNP). Repeat copies occupy residues 163–168 (FNPNMQ), 170–174 (RPGFN), 186–190 (FNPRM), 191–195 (NPNMQ), 196–200 (RPGFN), 199–204 (FNPNMQ), 206–210 (RPGFN), 222–226 (FNPRM), 227–231 (NPNMQ), 232–236 (RPGFN), 249–254 (FNPNMQ), 256–260 (RPGFN), and 259–264 (FNPNMQ). A 6 X 5 AA repeats of [FM]-N-P-N-M-Q region spans residues 163–264 (FNPNMQQRPG…QRPGFNPNMQ (102 aa)). Residues 170 to 260 (RPGFNQPNQQ…PNMQQRPGFN (91 aa)) are 5 X 5 AA repeats of R-P-G-F-N. Residues 186-226 (FNPRMNPNMQRPGFNPNMQQRPGFNQPNQQFQPHNNFNPRM) are 2 X 5 AA repeats of F-N-P-R-M. The span at 204-224 (QQRPGFNQPNQQFQPHNNFNP) shows a compositional bias: low complexity. Low complexity predominate over residues 235–257 (FNQPHPNQFAQPNNFNPNMQQRP). Polar residues predominate over residues 261-271 (PNMQQRPNPSQ).

The protein resides in the cell projection. The protein localises to the attachment organelle membrane. Adhesin necessary for successful cytadherence and virulence. The protein is P32 adhesin of Mycoplasma genitalium (strain ATCC 33530 / DSM 19775 / NCTC 10195 / G37) (Mycoplasmoides genitalium).